We begin with the raw amino-acid sequence, 319 residues long: Methionyl-tRNA formyltransferase (319 aa).

(6S)-5,6,7,8-tetrahydrofolate is bound at residue S115 to P118.

It belongs to the Fmt family.

It carries out the reaction L-methionyl-tRNA(fMet) + (6R)-10-formyltetrahydrofolate = N-formyl-L-methionyl-tRNA(fMet) + (6S)-5,6,7,8-tetrahydrofolate + H(+). Functionally, attaches a formyl group to the free amino group of methionyl-tRNA(fMet). The formyl group appears to play a dual role in the initiator identity of N-formylmethionyl-tRNA by promoting its recognition by IF2 and preventing the misappropriation of this tRNA by the elongation apparatus. This Lactococcus lactis subsp. lactis (strain IL1403) (Streptococcus lactis) protein is Methionyl-tRNA formyltransferase.